A 386-amino-acid polypeptide reads, in one-letter code: ATP phosphoribosyltransferase regulatory subunit (386 aa).

This sequence belongs to the class-II aminoacyl-tRNA synthetase family. HisZ subfamily. Heteromultimer composed of HisG and HisZ subunits.

It localises to the cytoplasm. Its pathway is amino-acid biosynthesis; L-histidine biosynthesis; L-histidine from 5-phospho-alpha-D-ribose 1-diphosphate: step 1/9. In terms of biological role, required for the first step of histidine biosynthesis. May allow the feedback regulation of ATP phosphoribosyltransferase activity by histidine. The protein is ATP phosphoribosyltransferase regulatory subunit of Limosilactobacillus fermentum (strain NBRC 3956 / LMG 18251) (Lactobacillus fermentum).